The chain runs to 580 residues: Acyl-coenzyme A synthetase ACSM4, mitochondrial (580 aa).

Residues 1-22 constitute a mitochondrion transit peptide; that stretch reads MKIFFRYQTFRFIWLTKPPGRR. Residues 229–237, 368–373, Asp-455, Arg-470, and Lys-566 each bind ATP; these read TSGTTGFPK and EGYGQT.

This sequence belongs to the ATP-dependent AMP-binding enzyme family. Requires Mg(2+) as cofactor. It depends on Mn(2+) as a cofactor.

The protein localises to the mitochondrion. It carries out the reaction a medium-chain fatty acid + ATP + CoA = a medium-chain fatty acyl-CoA + AMP + diphosphate. It catalyses the reaction hexanoate + ATP + CoA = hexanoyl-CoA + AMP + diphosphate. The enzyme catalyses octanoate + ATP + CoA = octanoyl-CoA + AMP + diphosphate. The catalysed reaction is decanoate + ATP + CoA = decanoyl-CoA + AMP + diphosphate. It carries out the reaction dodecanoate + ATP + CoA = dodecanoyl-CoA + AMP + diphosphate. Functionally, catalyzes the activation of fatty acids by CoA to produce an acyl-CoA, the first step in fatty acid metabolism. Capable of activating medium-chain fatty acids with a preference for C6-12 fatty acids. The sequence is that of Acyl-coenzyme A synthetase ACSM4, mitochondrial (ACSM4) from Homo sapiens (Human).